The primary structure comprises 202 residues: Ras-related protein Rab-1A (202 aa).

Residues 15–23 (GDSGVGKSC), 33–40 (YSESFIST), 63–67 (DTAGQ), 121–124 (NKSD), and 151–153 (SAK) each bind GTP. The Effector region motif lies at 37-45 (FISTIGVDF). The tract at residues 180–202 (QTVDKNKVVPGSSAPISPKSGCC) is disordered. S-geranylgeranyl cysteine attachment occurs at residues Cys-201 and Cys-202.

It belongs to the small GTPase superfamily. Rab family.

The protein localises to the cell membrane. The chain is Ras-related protein Rab-1A (rab1A) from Dictyostelium discoideum (Social amoeba).